Here is a 318-residue protein sequence, read N- to C-terminus: ADP-L-glycero-D-manno-heptose-6-epimerase (318 aa).

Residues 10–11 (FI), 31–32 (DD), K38, K53, and 79–83 (EGACS) contribute to the NADP(+) site. The active-site Proton acceptor is Y144. Position 148 (K148) interacts with NADP(+). A substrate-binding site is contributed by N173. Residues V174 and K182 each coordinate NADP(+). Catalysis depends on K182, which acts as the Proton acceptor. Residues S184, H191, 205-208 (FEGC), R218, and Y282 each bind substrate.

Belongs to the NAD(P)-dependent epimerase/dehydratase family. HldD subfamily. As to quaternary structure, homopentamer. NADP(+) serves as cofactor.

It carries out the reaction ADP-D-glycero-beta-D-manno-heptose = ADP-L-glycero-beta-D-manno-heptose. Its pathway is nucleotide-sugar biosynthesis; ADP-L-glycero-beta-D-manno-heptose biosynthesis; ADP-L-glycero-beta-D-manno-heptose from D-glycero-beta-D-manno-heptose 7-phosphate: step 4/4. Catalyzes the interconversion between ADP-D-glycero-beta-D-manno-heptose and ADP-L-glycero-beta-D-manno-heptose via an epimerization at carbon 6 of the heptose. This is ADP-L-glycero-D-manno-heptose-6-epimerase from Aeromonas hydrophila subsp. hydrophila (strain ATCC 7966 / DSM 30187 / BCRC 13018 / CCUG 14551 / JCM 1027 / KCTC 2358 / NCIMB 9240 / NCTC 8049).